A 160-amino-acid chain; its full sequence is Small ribosomal subunit protein uS7 (160 aa).

The protein belongs to the universal ribosomal protein uS7 family. Part of the 30S ribosomal subunit. Contacts proteins S9 and S11.

Its function is as follows. One of the primary rRNA binding proteins, it binds directly to 16S rRNA where it nucleates assembly of the head domain of the 30S subunit. Is located at the subunit interface close to the decoding center, probably blocks exit of the E-site tRNA. The polypeptide is Small ribosomal subunit protein uS7 (Ehrlichia chaffeensis (strain ATCC CRL-10679 / Arkansas)).